The sequence spans 223 residues: Deoxyribose-phosphate aldolase (223 aa).

The active-site Proton donor/acceptor is aspartate 89. Lysine 154 functions as the Schiff-base intermediate with acetaldehyde in the catalytic mechanism. Lysine 183 functions as the Proton donor/acceptor in the catalytic mechanism.

Belongs to the DeoC/FbaB aldolase family. DeoC type 1 subfamily.

The protein localises to the cytoplasm. It catalyses the reaction 2-deoxy-D-ribose 5-phosphate = D-glyceraldehyde 3-phosphate + acetaldehyde. It functions in the pathway carbohydrate degradation; 2-deoxy-D-ribose 1-phosphate degradation; D-glyceraldehyde 3-phosphate and acetaldehyde from 2-deoxy-alpha-D-ribose 1-phosphate: step 2/2. In terms of biological role, catalyzes a reversible aldol reaction between acetaldehyde and D-glyceraldehyde 3-phosphate to generate 2-deoxy-D-ribose 5-phosphate. The sequence is that of Deoxyribose-phosphate aldolase from Thermoanaerobacter pseudethanolicus (strain ATCC 33223 / 39E) (Clostridium thermohydrosulfuricum).